A 162-amino-acid polypeptide reads, in one-letter code: Neuritin-like protein (162 aa).

The first 32 residues, 1 to 32, serve as a signal peptide directing secretion; sequence MMCNCCHCHWRRRCQRLPCALTLLLLLPLAVA. The GPI-anchor amidated alanine moiety is linked to residue Ala136. A propeptide spans 137-162 (removed in mature form); that stretch reads PALAPAPAPVLLAAALALACLLGPLA.

Belongs to the neuritin family.

The protein resides in the cell membrane. The polypeptide is Neuritin-like protein (Nrn1l) (Mus musculus (Mouse)).